The sequence spans 833 residues: MRQCALFLTSLVPIVLAPRPPDEPGFGSPQRLEKLDSLLSDYDILSLSSIRQHSVRKRDLQASTHLETLLTFSALNRHFKLYLTSSTERFSQNFKVVVVDGEDESEYPVKWQDFFSGHVVGEPDSRVLAHIGDDDITVRINTDGAEYNIEPLWRLINDTKDKRVLVYKSEDIKNVSRLQSPKVCGYIKADNEELLPKGLVDREPPDELVHRVKRRADPNPLRNTCKLLVVADHRFYKYMGRGEESTTTNYLIELIDRVDDIYRNTSWDNAGFKGYGIQIEQIRILKSPQEVKPGERHYNMAKSYPNEEKDAWDVKMLLEQFSFDIAEEASKVCLAHLFTYQDFDMGTLGLAYVGSPRANSHGGVCPKAYYSPIGKKNIYLNSGLTSTKNYGKTILTKEADLVTTHELGHNFGAEHDPDGLAECAPNEDQGGKYVMYPIAVSGDHENNKMFSNCSKQSIYKTIESKAQECFQERSNKVCGNSRVDEGEECDPGIMYLNNDTCCNSDCTLRPGVQCSDRNSPCCKNCQFETAQKKCQEAINATCKGVSYCTGNSSECPPPGNAEDDTVCLDLGRCKDGKCVPFCEREQRLESCACNETDHSCKVCCRAPSGRCLPYVDAEQKNLFLRKGKPCTVGFCDMNGKCEKRVQDVIERFWEFIDKLSINTFGKFLADNIVGSVLVFSLMLWIPVSILVHCVDKKLDKQYESLSLLHPSNVEMLSSMDSASVRIIKPFPAPQTPGRLQPLQPLQPGPVLPSAPSVPVAPKLDHQRMDTIQEDPSTDSHVDEDGFEKDPFPNSSAAAKSFEDLTDHPVTRSEKASSFKLQRQSRVDSKETEC.

The signal sequence occupies residues 1–17 (MRQCALFLTSLVPIVLA). Positions 223–474 (NTCKLLVVAD…KAQECFQERS (252 aa)) constitute a Peptidase M12B domain. An interaction with classical swine fever virus envelope glycoprotein E2 region spans residues 301–345 (AKSYPNEEKDAWDVKMLLEQFSFDIAEEASKVCLAHLFTYQDFDM). Cystine bridges form between Cys365/Cys469, Cys423/Cys453, and Cys534/Cys555. A Zn(2+)-binding site is contributed by His405. Residue Glu406 is part of the active site. Zn(2+) is bound by residues His409 and His415. The region spanning 475-563 (NKVCGNSRVD…ECPPPGNAED (89 aa)) is the Disintegrin domain. The helical transmembrane segment at 672-692 (IVGSVLVFSLMLWIPVSILVH) threads the bilayer. Disordered regions lie at residues 735–760 (TPGRLQPLQPLQPGPVLPSAPSVPVA) and 772–833 (QEDP…ETEC). Basic and acidic residues-rich tracts occupy residues 777–790 (TDSHVDEDGFEKDP), 800–816 (SFEDLTDHPVTRSEKAS), and 824–833 (SRVDSKETEC).

(Microbial infection) Interacts (via metalloproteinase domain) with classical swine fever virus envelope glycoprotein E2; this interaction allows binding and probably entry of the virus into the cell. In terms of assembly, interacts with MAD2L1, MAPK14 and MUC1. Interacts with iRhom1/RHBDF1 and iRhom2/RHBDF2. Interacts with FRMD8 via its interaction with iRhom1/RHBDF1 and iRhom2/RHBDF2. Zn(2+) is required as a cofactor. Post-translationally, the precursor is cleaved by a furin endopeptidase. In terms of processing, phosphorylated.

Its subcellular location is the membrane. It catalyses the reaction Narrow endopeptidase specificity. Cleaves Pro-Leu-Ala-Gln-Ala-|-Val-Arg-Ser-Ser-Ser in the membrane-bound, 26-kDa form of tumor necrosis factor alpha (TNFalpha). Similarly cleaves other membrane-anchored, cell-surface proteins to 'shed' the extracellular domains.. Its function is as follows. Transmembrane metalloprotease which mediates the ectodomain shedding of a myriad of transmembrane proteins including adhesion proteins, growth factor precursors and cytokines important for inflammation and immunity. Cleaves the membrane-bound precursor of TNF-alpha to its mature soluble form. Responsible for the proteolytical release of soluble JAM3 from endothelial cells surface. Responsible for the proteolytic release of several other cell-surface proteins, including p75 TNF-receptor, interleukin 1 receptor type II, p55 TNF-receptor, transforming growth factor-alpha, L-selectin, growth hormone receptor, MUC1 and the amyloid precursor protein. Acts as an activator of Notch pathway by mediating cleavage of Notch, generating the membrane-associated intermediate fragment called Notch extracellular truncation (NEXT). Plays a role in the proteolytic processing of ACE2. Plays a role in hemostasis through shedding of GP1BA, the platelet glycoprotein Ib alpha chain. Mediates the proteolytic cleavage of LAG3, leading to release the secreted form of LAG3. Mediates the proteolytic cleavage of IL6R, leading to the release of secreted form of IL6R. Mediates the proteolytic cleavage and shedding of FCGR3A upon NK cell stimulation, a mechanism that allows for increased NK cell motility and detachment from opsonized target cells. Cleaves TREM2, resulting in shedding of the TREM2 ectodomain. (Microbial infection) Acts as a receptor for classical swine fever virus. The sequence is that of Disintegrin and metalloproteinase domain-containing protein 17 (ADAM17) from Sus scrofa (Pig).